The primary structure comprises 501 residues: Actin-binding protein WASF3 (501 aa).

Residues 57–93 (NEANNFYIRANSLQDRIDRLAVKVTQLDSTVEEVSLQ) are a coiled coil. Y151 is modified (phosphotyrosine; by ABL1). A coiled-coil region spans residues 162–206 (KEKMLQDTEDKRKEKRRQKEQKRVDGTTREVKKVRKARNRRQEWN). Positions 170 to 443 (EDKRKEKRRQ…PPISDARSDL (274 aa)) are disordered. Basic and acidic residues predominate over residues 182-192 (QKRVDGTTREV). The segment covering 219 to 237 (RLSQSVHHGASSEGSLSPD) has biased composition (polar residues). Y248 bears the Phosphotyrosine; by ABL1 mark. The segment covering 256–267 (HALQAQPATPSY) has biased composition (polar residues). Positions 302-312 (QQPPPPPPPQA) are enriched in pro residues. At Y337 the chain carries Phosphotyrosine; by ABL1. Pro residues-rich tracts occupy residues 341–352 (SGPPPPPPPPMI) and 394–410 (APPP…PPGP). A compositionally biased stretch (low complexity) spans 411–422 (SSLSSSPMHGPP). The WH2 domain occupies 439-456 (ARSDLLAAIRMGIQLKKV). Residue Y485 is modified to Phosphotyrosine; by ABL1.

It belongs to the SCAR/WAVE family. Binds actin and the Arp2/3 complex. Phosphorylation by ABL1 promotes lamellipodia formation and cell migration.

It is found in the cytoplasm. The protein localises to the cytoskeleton. Downstream effector molecules involved in the transmission of signals from tyrosine kinase receptors and small GTPases to the actin cytoskeleton. Plays a role in the regulation of cell morphology and cytoskeletal organization. Required in the control of cell shape. This chain is Actin-binding protein WASF3 (Wasf3), found in Mus musculus (Mouse).